The sequence spans 476 residues: ATP synthase subunit beta (476 aa).

Residue 152 to 159 (GGAGVGKT) participates in ATP binding.

It belongs to the ATPase alpha/beta chains family. F-type ATPases have 2 components, CF(1) - the catalytic core - and CF(0) - the membrane proton channel. CF(1) has five subunits: alpha(3), beta(3), gamma(1), delta(1), epsilon(1). CF(0) has three main subunits: a(1), b(2) and c(9-12). The alpha and beta chains form an alternating ring which encloses part of the gamma chain. CF(1) is attached to CF(0) by a central stalk formed by the gamma and epsilon chains, while a peripheral stalk is formed by the delta and b chains.

It localises to the cell inner membrane. It carries out the reaction ATP + H2O + 4 H(+)(in) = ADP + phosphate + 5 H(+)(out). Produces ATP from ADP in the presence of a proton gradient across the membrane. The catalytic sites are hosted primarily by the beta subunits. In Granulibacter bethesdensis (strain ATCC BAA-1260 / CGDNIH1), this protein is ATP synthase subunit beta.